Here is a 601-residue protein sequence, read N- to C-terminus: Polypeptide N-acetylgalactosaminyltransferase 11 (601 aa).

The Cytoplasmic portion of the chain corresponds to 1–7 (MGSAALR). Residues 8-28 (CFCYGCLFTSVTWTLLLFIYF) form a helical; Signal-anchor for type II membrane protein membrane-spanning segment. N-linked (GlcNAc...) asparagine glycosylation is found at asparagine 29 and asparagine 202. Residues 29 to 601 (NFSEESQGFR…SPSQQWHLEN (573 aa)) are Lumenal-facing. Residues 143 to 254 (LPMASIVICF…EMWLQPLLAP (112 aa)) form a catalytic subdomain A region. Positions 312-374 (PFRSPTMAGG…PCSRVGHIFR (63 aa)) are catalytic subdomain B. The Ricin B-type lectin domain maps to 469–600 (RPKILQRGRL…GSPSQQWHLE (132 aa)). Cysteine 486 and cysteine 505 are joined by a disulfide. N-linked (GlcNAc...) asparagine glycosylation is present at asparagine 508. 2 disulfides stabilise this stretch: cysteine 529/cysteine 546 and cysteine 571/cysteine 589.

This sequence belongs to the glycosyltransferase 2 family. GalNAc-T subfamily. As to quaternary structure, interacts with notch1. Requires Mn(2+) as cofactor. Ca(2+) serves as cofactor.

It is found in the golgi apparatus membrane. It carries out the reaction L-seryl-[protein] + UDP-N-acetyl-alpha-D-galactosamine = a 3-O-[N-acetyl-alpha-D-galactosaminyl]-L-seryl-[protein] + UDP + H(+). The enzyme catalyses L-threonyl-[protein] + UDP-N-acetyl-alpha-D-galactosamine = a 3-O-[N-acetyl-alpha-D-galactosaminyl]-L-threonyl-[protein] + UDP + H(+). Its pathway is protein modification; protein glycosylation. Polypeptide N-acetylgalactosaminyltransferase that catalyzes the initiation of protein O-linked glycosylation and is involved in left/right asymmetry by mediating O-glycosylation of NOTCH1. O-glycosylation of NOTCH1 promotes activation of NOTCH1, modulating the balance between motile and immotile (sensory) cilia at the left-right organiser (LRO). Polypeptide N-acetylgalactosaminyltransferases catalyze the transfer of an N-acetyl-D-galactosamine residue to a serine or threonine residue on the protein receptor. This is Polypeptide N-acetylgalactosaminyltransferase 11 (galnt11) from Xenopus tropicalis (Western clawed frog).